The sequence spans 87 residues: Small ribosomal subunit protein bS20 (87 aa).

The disordered stretch occupies residues 1–22 (MANSAQARKRARQAVKQRAHNA). A compositionally biased stretch (basic residues) spans 7-19 (ARKRARQAVKQRA).

The protein belongs to the bacterial ribosomal protein bS20 family.

Binds directly to 16S ribosomal RNA. The chain is Small ribosomal subunit protein bS20 from Methylobacillus flagellatus (strain ATCC 51484 / DSM 6875 / VKM B-1610 / KT).